The primary structure comprises 340 residues: Guanine nucleotide-binding protein G(I)/G(S)/G(T) subunit beta-1 (340 aa).

N-acetylserine is present on S2. S2 carries the post-translational modification Phosphoserine. WD repeat units follow at residues 46 to 94 (RTRR…HAIP), 95 to 140 (LRSS…RELA), 141 to 181 (GHTG…TTFT), 182 to 223 (GHTG…QTFT), 224 to 267 (GHES…YSHD), 268 to 309 (NIIC…GVLA), and 310 to 340 (GHDDRVSCLGVTDDGMAVATGSWDSFLKIWN). A Phosphohistidine modification is found at H266.

The protein belongs to the WD repeat G protein beta family. In terms of assembly, g proteins are composed of 3 units, alpha, beta and gamma. The heterodimer formed by GNB1 and GNG2 interacts with ARHGEF5. The heterodimer formed by GNB1 and GNG2 interacts with GRK2. Forms a complex with GNAO1 and GNG3. Interacts with ARHGEF18 and RASD2. Forms complexes with TAS2R14 and G-proteins; these complexes play a role in the perception of bitterness. Component of the TAS2R14-GNAI1 complex, consisting of TAS2R14, GNAI1, GNB1 and GNG2. Component of the TAS2R14-GNAT3 complex, consisting of TAS2R14, GNAT3, GNB1 and GNG2. Component of the TAS2R14-GNAS2 complex, consisting of TAS2R14, GNAS2, GNB1 and GNG2. In terms of processing, phosphorylation at His-266 by NDKB contributes to G protein activation by increasing the high energetic phosphate transfer onto GDP.

In terms of biological role, guanine nucleotide-binding proteins (G proteins) are involved as a modulator or transducer in various transmembrane signaling systems. The beta and gamma chains are required for the GTPase activity, for replacement of GDP by GTP, and for G protein-effector interaction. This Pongo abelii (Sumatran orangutan) protein is Guanine nucleotide-binding protein G(I)/G(S)/G(T) subunit beta-1 (GNB1).